Consider the following 262-residue polypeptide: Hemin import ATP-binding protein HmuV (262 aa).

Residues 3 to 244 (LQARNLTLAR…DHMRRVYGIE (242 aa)) enclose the ABC transporter domain. 35–42 (GANGAGKS) lines the ATP pocket.

This sequence belongs to the ABC transporter superfamily. Heme (hemin) importer (TC 3.A.1.14.5) family. As to quaternary structure, the complex is composed of two ATP-binding proteins (HmuV), two transmembrane proteins (HmuU) and a solute-binding protein (HmuT).

It localises to the cell inner membrane. Functionally, part of the ABC transporter complex HmuTUV involved in hemin import. Responsible for energy coupling to the transport system. This Bordetella bronchiseptica (strain ATCC BAA-588 / NCTC 13252 / RB50) (Alcaligenes bronchisepticus) protein is Hemin import ATP-binding protein HmuV.